We begin with the raw amino-acid sequence, 640 residues long: Threonine--tRNA ligase (640 aa).

The segment at 224–525 is catalytic; the sequence is DHRKLGKELD…LTEHYAGAFP (302 aa). Residues cysteine 323, histidine 374, and histidine 502 each coordinate Zn(2+).

Belongs to the class-II aminoacyl-tRNA synthetase family. In terms of assembly, homodimer. Requires Zn(2+) as cofactor.

The protein localises to the cytoplasm. It carries out the reaction tRNA(Thr) + L-threonine + ATP = L-threonyl-tRNA(Thr) + AMP + diphosphate + H(+). Catalyzes the attachment of threonine to tRNA(Thr) in a two-step reaction: L-threonine is first activated by ATP to form Thr-AMP and then transferred to the acceptor end of tRNA(Thr). Also edits incorrectly charged L-seryl-tRNA(Thr). This is Threonine--tRNA ligase from Tropheryma whipplei (strain TW08/27) (Whipple's bacillus).